Consider the following 304-residue polypeptide: Tritrans,polycis-undecaprenyl-diphosphate synthase (geranylgeranyl-diphosphate specific) (304 aa).

The active site involves Asp-33. Asp-33 serves as a coordination point for Mg(2+). Substrate is bound by residues 34-37 (GNRR), Lys-46, His-50, and 78-80 (STE). Residue Asn-81 is the Proton acceptor of the active site. Residues Phe-82, Arg-84, Arg-203, and 209–211 (RTS) each bind substrate.

Belongs to the UPP synthase family. Homodimer. Requires Mg(2+) as cofactor.

The enzyme catalyses geranylgeranyl diphosphate + 7 isopentenyl diphosphate = tri-trans,hepta-cis-undecaprenyl diphosphate + 7 diphosphate. Functionally, catalyzes the sequential condensation of isopentenyl diphosphate (IPP) with geranylgeranyl diphosphate (GGPP) to yield (2Z,6Z,10Z,14Z,18Z,22Z,26Z,30E,34E,38E)-undecaprenyl diphosphate (tritrans,heptacis-UPP). It is probably the precursor of glycosyl carrier lipids. This is Tritrans,polycis-undecaprenyl-diphosphate synthase (geranylgeranyl-diphosphate specific) from Haloarcula marismortui (strain ATCC 43049 / DSM 3752 / JCM 8966 / VKM B-1809) (Halobacterium marismortui).